Consider the following 297-residue polypeptide: Protease HtpX homolog (297 aa).

The chain crosses the membrane as a helical span at residues 16-36; the sequence is IFMAIGFLVGGMAGMILAFVV. His134 serves as a coordination point for Zn(2+). Glu135 is a catalytic residue. His138 contributes to the Zn(2+) binding site. 2 consecutive transmembrane segments (helical) span residues 147 to 167 and 175 to 195; these read MTVT…ALFF and IGSI…QMAI. Position 200 (Glu200) interacts with Zn(2+).

It belongs to the peptidase M48B family. Requires Zn(2+) as cofactor.

The protein resides in the cell inner membrane. The protein is Protease HtpX homolog of Hyphomonas neptunium (strain ATCC 15444).